A 259-amino-acid polypeptide reads, in one-letter code: Bisphosphoglycerate mutase (259 aa).

S2 is subject to N-acetylserine. N-linked (Glc) (glycation) lysine; in vitro glycans are attached at residues K3 and K5. Residue 10-17 coordinates substrate; it reads RHGEGAWN. H11 acts as the Tele-phosphohistidine intermediate in catalysis. K18 is a glycosylation site (N-linked (Glc) (glycation) lysine; in vitro). Residue 23–24 participates in substrate binding; it reads CS. K43 carries an N-linked (Glc) (glycation) lysine; in vitro glycan. Substrate is bound by residues R62, 89-92, R100, and 116-117; these read ERHY and RR. The active-site Proton donor/acceptor is E89. T122 is subject to Phosphothreonine. N-linked (Glc) (glycation) lysine glycosylation occurs at K159. 189-190 serves as a coordination point for substrate; it reads GN. N-linked (Glc) (glycation) lysine; in vitro glycosylation is present at K197.

The protein belongs to the phosphoglycerate mutase family. BPG-dependent PGAM subfamily. In terms of assembly, homodimer. In terms of processing, glycation of Lys-159 in diabetic patients inactivates the enzyme. In terms of tissue distribution, expressed in red blood cells. Expressed in non-erythroid cells of the placenta; present in the syncytiotrophoblast layer of the placental villi at the feto-maternal interface (at protein level).

The enzyme catalyses (2R)-3-phospho-glyceroyl phosphate = (2R)-2,3-bisphosphoglycerate + H(+). It carries out the reaction (2R)-2-phosphoglycerate = (2R)-3-phosphoglycerate. With respect to regulation, at alkaline pH BPGM favors the synthase reaction; however, at lower pH the phosphatase reaction is dominant. Inhibited by citrate. Its function is as follows. Plays a major role in regulating hemoglobin oxygen affinity by controlling the levels of its allosteric effector 2,3-bisphosphoglycerate (2,3-BPG). Also exhibits mutase (EC 5.4.2.11) activity. This chain is Bisphosphoglycerate mutase (BPGM), found in Homo sapiens (Human).